Here is a 460-residue protein sequence, read N- to C-terminus: tRNA hydroxylation protein P (460 aa).

The protein belongs to the peptidase U32 family.

In terms of biological role, involved in prephenate-dependent formation of 5-hydroxyuridine (ho5U) modification at position 34 in tRNAs, the first step in 5-carboxymethoxyuridine (cmo5U) biosynthesis. This is tRNA hydroxylation protein P from Haemophilus influenzae (strain ATCC 51907 / DSM 11121 / KW20 / Rd).